Reading from the N-terminus, the 396-residue chain is MAVQESAAQLSMALKVQEYPTLKVPYETLNKRFRAAQKNIDRETSHVTMVVAELEKTLSSCSAVDSVVSLLDGVVEKLSVLKRKAMESIQAEDESAKLCKRRIEHLKEHSSDQTAAINMWKKKRMDRMMVEHLLRCGYYNTAVKLARQSEIEDLVNIEMFLTAKEVEESLERQETMTCLAWCHDNKSRLRKMKSCLEFSLRIQEFIELIRQNKRLDAVRHARKHFSQAEGSQLDEVRQVMGMLAFPSDTHISPYKDLLDPARWRMLIQQFRYDNYRLHQLGNNSVFTITLQAGLSAIKTPQCYKEDGTSKNPDCPVCSKSLNKLAQPLPLAHCANSRLVCKISGDVMNENNPPMMLPNGYVYGYNSLLSIRQDDKVVCPRTKEVFNFSQAEKVYIM.

In terms of domain architecture, LisH spans 121–153 (KKKRMDRMMVEHLLRCGYYNTAVKLARQSEIED). Residues 159-216 (MFLTAKEVEESLERQETMTCLAWCHDNKSRLRKMKSCLEFSLRIQEFIELIRQNKRLD) enclose the CTLH domain. The RING-Gid-type zinc-finger motif lies at 314 to 381 (CPVCSKSLNK…QDDKVVCPRT (68 aa)).

As to quaternary structure, identified in the CTLH complex that contains at least MAEA, RMND5A, GID8, WDR26, and RANBP9 and/or RANBP10 as the catalytic core. Interacts with F-actin.

The protein resides in the nucleus matrix. Its subcellular location is the cell membrane. The protein localises to the cytoplasm. It is found in the cytoskeleton. It carries out the reaction S-ubiquitinyl-[E2 ubiquitin-conjugating enzyme]-L-cysteine + [acceptor protein]-L-lysine = [E2 ubiquitin-conjugating enzyme]-L-cysteine + N(6)-ubiquitinyl-[acceptor protein]-L-lysine.. Its function is as follows. Core component of the CTLH E3 ubiquitin-protein ligase complex that selectively accepts ubiquitin from UBE2H and mediates ubiquitination and subsequent proteasomal degradation of the transcription factor HBP1. MAEA and RMND5A are both required for catalytic activity of the CTLH E3 ubiquitin-protein ligase complex. MAEA is required for normal cell proliferation. The CTLH E3 ubiquitin-protein ligase complex is not required for the degradation of enzymes involved in gluconeogenesis, such as FBP1. Plays a role in erythroblast maturation and in the development of mature macrophages. Mediates the attachment of erythroid cell to mature macrophages; this MAEA-mediated contact inhibits erythroid cell apoptosis. Participates in erythroblastic island formation, which is the functional unit of definitive erythropoiesis. Associates with F-actin to regulate actin distribution in erythroblasts and macrophages. May contribute to nuclear architecture and cells division events. This Xenopus laevis (African clawed frog) protein is E3 ubiquitin-protein transferase MAEA (maea).